Here is a 221-residue protein sequence, read N- to C-terminus: NEDD4 family-interacting protein 1 (221 aa).

Residue Ala2 is modified to N-acetylalanine. Positions Ala2–Pro41 are interaction with UBE2L3. The Cytoplasmic portion of the chain corresponds to Ala2–Gly116. Residues Gly18 to Ser44 form a disordered region. Short sequence motifs (PPxY motif) lie at residues Pro39–Tyr42, Pro64–Tyr67, and Pro74–Tyr76. An interaction with ITCH region spans residues Tyr42 to Tyr76. The helical transmembrane segment at Ile117–Phe137 threads the bilayer. Residues Cys138–Ala143 lie on the Extracellular side of the membrane. A helical transmembrane segment spans residues Ala144–Val164. Residues Arg165 to Gly172 lie on the Cytoplasmic side of the membrane. A helical transmembrane segment spans residues Tyr173–Leu193. Residues Arg194 to Tyr221 lie on the Extracellular side of the membrane.

In terms of assembly, forms heterodimers with NDFIP2. Interacts with several E3 ubiquitin-protein ligases, including ITCH, NEDD4, NEDD4L and WWP2. The interaction with NEDD4, NEDD4L and ITCH leads to relocalization of these proteins to exosomes and eventually to exosomal secretion. Interacts with U2SURP. Interacts with SLC11A2/DMT1. Interacts with PTEN. May interact with phosphorylated EGFR. Interacts with BRAT1. Interacts with KCNH2. Interacts with MAVS. Part of a complex containing ITCH, NDFIP1 and MAP3K7. Interacts (via N-terminus) with UBE2L3; the interaction mediates recruitment of UBE2L3 to ITCH. In terms of processing, ubiquitinated by NEDD4; mono-, di- and polyubiquitinated forms are detected. Ubiquitination regulates its degradation. Post-translationally, undergoes transient tyrosine phosphorylation following EGF stimulation, most probably by catalyzed by SRC. Phosphorylation SRC is enhanced in the presence of NDFIP2 which may act as a scaffold to recruit SRC to NDFIP1. In terms of tissue distribution, highly expressed in embryonic and early postnatal cortex (at protein level). Widely expressed. Hardly detectable in resting T-cells; up-regulated in T-cells in response to activation.

The protein localises to the endosome membrane. Its subcellular location is the golgi apparatus membrane. It localises to the synapse. The protein resides in the synaptosome. It is found in the cell projection. The protein localises to the dendrite. Its subcellular location is the secreted. Activates HECT domain-containing E3 ubiquitin-protein ligases, including NEDD4 and ITCH, and consequently modulates the stability of their targets. As a result, controls many cellular processes. Prevents chronic T-helper cell-mediated inflammation by activating ITCH and thus controlling JUNB degradation. Promotes pancreatic beta cell death through degradation of JUNB and inhibition of the unfolded protein response, leading to reduction of insulin secretion. Restricts the production of pro-inflammatory cytokines in effector Th17 T-cells by promoting ITCH-mediated ubiquitination and degradation of RORC. Together with NDFIP2, limits the cytokine signaling and expansion of effector Th2 T-cells by promoting degradation of JAK1, probably by ITCH- and NEDD4L-mediated ubiquitination. Regulates peripheral T-cell tolerance to self and foreign antigens, forcing the exit of naive CD4+ T-cells from the cell cycle before they become effector T-cells. Negatively regulates RLR-mediated antiviral response by promoting SMURF1-mediated ubiquitination and subsequent degradation of MAVS. Negatively regulates KCNH2 potassium channel activity by decreasing its cell-surface expression and interfering with channel maturation through recruitment of NEDD4L to the Golgi apparatus where it mediates KCNH2 degradation. In cortical neurons, mediates the ubiquitination of the divalent metal transporter SLC11A2/DMT1 by NEDD4L, leading to its down-regulation and protection of the cells from cobalt and iron toxicity. Important for normal development of dendrites and dendritic spines in cortex. Enhances the ubiquitination of BRAT1 mediated by: NEDD4, NEDD4L and ITCH and is required for the nuclear localization of ubiquitinated BRAT1. Enhances the ITCH-mediated ubiquitination of MAP3K7 by recruiting E2 ubiquitin-conjugating enzyme UBE2L3 to ITCH. Modulates EGFR signaling through multiple pathways. In particular, may regulate the ratio of AKT1-to-MAPK8 signaling in response to EGF, acting on AKT1 probably through PTEN destabilization and on MAPK8 through ITCH-dependent MAP2K4 inactivation. As a result, may control cell growth rate. Inhibits cell proliferation by promoting PTEN nuclear localization and changing its signaling specificity. This is NEDD4 family-interacting protein 1 (Ndfip1) from Mus musculus (Mouse).